Consider the following 645-residue polypeptide: Cyclic nucleotide-gated channel rod photoreceptor subunit alpha (645 aa).

Over 1-121 (MKVGVIETHH…PAGNMYYNWL (121 aa)) the chain is Cytoplasmic. The tract at residues 53 to 100 (NNNSNKDEEKKKKKEKKSKSENKKDGERQKNKEKKEKHKNKDKKKGKE) is disordered. Residues 70–86 (SKSENKKDGERQKNKEK) are compositionally biased toward basic and acidic residues. The span at 87 to 96 (KEKHKNKDKK) shows a compositional bias: basic residues. A helical transmembrane segment spans residues 122-143 (FCITMPVMYNWTMIIARACFDE). Over 144-153 (LQNDYLAVWF) the chain is Extracellular. A helical transmembrane segment spans residues 154-174 (IVDYVSDVIYIADMFVRTRTG). The Cytoplasmic portion of the chain corresponds to 175–199 (YLEQGLLVKEEQKLKEKYKSSLQFK). Residues 200–218 (LDFLSIIPTDLLYFKLGLN) traverse the membrane as a helical segment. Residues 219-223 (YPELR) are Extracellular-facing. Residues 224-242 (INRLLRVARMFEFFQRTET) form a helical membrane-spanning segment. At 243–249 (RTNYPNI) the chain is on the cytoplasmic side. The chain crosses the membrane as a helical span at residues 250–273 (FRISNLVMYIVIIIHWNACVYYSI). The Extracellular portion of the chain corresponds to 274-296 (SKAIGFGADTWVYPNTSHPEFAR). Helical transmembrane passes span 297-331 (LTRK…FFVV) and 332-356 (VDFL…SNMN). Topologically, residues 357-645 (AARAEFQAKI…TDKPGVTKTE (289 aa)) are cytoplasmic. 3',5'-cyclic GMP is bound by residues 439–561 (LLVE…DGLL), E498, and R513.

The protein belongs to the cyclic nucleotide-gated cation channel (TC 1.A.1.5) family.

Its subcellular location is the membrane. Visual signal transduction is mediated by a G-protein coupled cascade using cGMP as second messenger. This protein can be activated by cGMP which leads to an opening of the cation channel and thereby causing a depolarization of rod photoreceptors. This Gallus gallus (Chicken) protein is Cyclic nucleotide-gated channel rod photoreceptor subunit alpha.